A 767-amino-acid chain; its full sequence is Acetylcholinesterase (767 aa).

Residues 1 to 19 (MAPLFLLLLLLLSPSPTSA) form the signal peptide. Cys94 and Cys121 are joined by a disulfide. Ser227 acts as the Acyl-ester intermediate in catalysis. Residues Cys281 and Cys292 are joined by a disulfide bond. A glycan (N-linked (GlcNAc...) asparagine) is linked at Asn285. The interval 401–504 (KEGYGVEGDG…YGAKMPPRPH (104 aa)) is disordered. The Charge relay system role is filled by Glu520. A glycan (N-linked (GlcNAc...) asparagine) is linked at Asn536. Cysteines 595 and 713 form a disulfide. The active-site Charge relay system is His633. Residues Asn650 and Asn725 are each glycosylated (N-linked (GlcNAc...) asparagine).

It belongs to the type-B carboxylesterase/lipase family. In terms of assembly, oligomer composed of disulfide-linked homodimers.

Its subcellular location is the synapse. It localises to the secreted. The protein localises to the cell membrane. The catalysed reaction is acetylcholine + H2O = choline + acetate + H(+). Functionally, terminates signal transduction at the neuromuscular junction by rapid hydrolysis of the acetylcholine released into the synaptic cleft. The protein is Acetylcholinesterase (ACHE) of Gallus gallus (Chicken).